A 230-amino-acid chain; its full sequence is 7-cyano-7-deazaguanine synthase (230 aa).

8 to 18 serves as a coordination point for ATP; it reads FSGGQDSTTCL. Zn(2+) is bound by residues cysteine 187, cysteine 196, cysteine 199, and cysteine 202.

It belongs to the QueC family. The cofactor is Zn(2+).

The catalysed reaction is 7-carboxy-7-deazaguanine + NH4(+) + ATP = 7-cyano-7-deazaguanine + ADP + phosphate + H2O + H(+). It functions in the pathway purine metabolism; 7-cyano-7-deazaguanine biosynthesis. In terms of biological role, catalyzes the ATP-dependent conversion of 7-carboxy-7-deazaguanine (CDG) to 7-cyano-7-deazaguanine (preQ(0)). The sequence is that of 7-cyano-7-deazaguanine synthase from Shewanella amazonensis (strain ATCC BAA-1098 / SB2B).